The chain runs to 396 residues: Elongation factor Tu (396 aa).

The tr-type G domain occupies 10–206; it reads KPHVNIGTIG…AVDSYIPDPE (197 aa). The interval 19–26 is G1; sequence GHVDHGKT. Position 19-26 (19-26) interacts with GTP; the sequence is GHVDHGKT. Threonine 26 contacts Mg(2+). Residues 60 to 64 form a G2 region; sequence GITIA. The G3 stretch occupies residues 81–84; it reads DCPG. GTP is bound by residues 81 to 85 and 136 to 139; these read DCPGH and NKAD. The segment at 136–139 is G4; the sequence is NKAD. The G5 stretch occupies residues 174 to 176; sequence SAL.

The protein belongs to the TRAFAC class translation factor GTPase superfamily. Classic translation factor GTPase family. EF-Tu/EF-1A subfamily. Monomer.

Its subcellular location is the cytoplasm. It catalyses the reaction GTP + H2O = GDP + phosphate + H(+). Its function is as follows. GTP hydrolase that promotes the GTP-dependent binding of aminoacyl-tRNA to the A-site of ribosomes during protein biosynthesis. The chain is Elongation factor Tu from Pelobacter propionicus (strain DSM 2379 / NBRC 103807 / OttBd1).